We begin with the raw amino-acid sequence, 441 residues long: Ribosomal protein uS12 methylthiotransferase RimO (441 aa).

Positions Pro-8 to Pro-118 constitute an MTTase N-terminal domain. [4Fe-4S] cluster-binding residues include Cys-17, Cys-53, Cys-82, Cys-150, Cys-154, and Cys-157. The 238-residue stretch at Leu-136–Glu-373 folds into the Radical SAM core domain. The region spanning Gln-376–Val-441 is the TRAM domain.

Belongs to the methylthiotransferase family. RimO subfamily. [4Fe-4S] cluster serves as cofactor.

Its subcellular location is the cytoplasm. The enzyme catalyses L-aspartate(89)-[ribosomal protein uS12]-hydrogen + (sulfur carrier)-SH + AH2 + 2 S-adenosyl-L-methionine = 3-methylsulfanyl-L-aspartate(89)-[ribosomal protein uS12]-hydrogen + (sulfur carrier)-H + 5'-deoxyadenosine + L-methionine + A + S-adenosyl-L-homocysteine + 2 H(+). Functionally, catalyzes the methylthiolation of an aspartic acid residue of ribosomal protein uS12. This Shigella boydii serotype 18 (strain CDC 3083-94 / BS512) protein is Ribosomal protein uS12 methylthiotransferase RimO.